The primary structure comprises 339 residues: DNA-directed RNA polymerase subunit alpha (339 aa).

The segment at 1–235 (MTIQKNWQEL…DQLNVFVNFE (235 aa)) is alpha N-terminal domain (alpha-NTD). The interval 251–339 (FNPAFLKKVD…ELAKRFEDHY (89 aa)) is alpha C-terminal domain (alpha-CTD).

The protein belongs to the RNA polymerase alpha chain family. In terms of assembly, homodimer. The RNAP catalytic core consists of 2 alpha, 1 beta, 1 beta' and 1 omega subunit. When a sigma factor is associated with the core the holoenzyme is formed, which can initiate transcription.

The catalysed reaction is RNA(n) + a ribonucleoside 5'-triphosphate = RNA(n+1) + diphosphate. In terms of biological role, DNA-dependent RNA polymerase catalyzes the transcription of DNA into RNA using the four ribonucleoside triphosphates as substrates. The polypeptide is DNA-directed RNA polymerase subunit alpha (Afipia carboxidovorans (strain ATCC 49405 / DSM 1227 / KCTC 32145 / OM5) (Oligotropha carboxidovorans)).